The chain runs to 245 residues: 5-oxoprolinase subunit A (245 aa).

Belongs to the LamB/PxpA family. Forms a complex composed of PxpA, PxpB and PxpC.

It carries out the reaction 5-oxo-L-proline + ATP + 2 H2O = L-glutamate + ADP + phosphate + H(+). Catalyzes the cleavage of 5-oxoproline to form L-glutamate coupled to the hydrolysis of ATP to ADP and inorganic phosphate. In Neisseria meningitidis serogroup A / serotype 4A (strain DSM 15465 / Z2491), this protein is 5-oxoprolinase subunit A.